We begin with the raw amino-acid sequence, 351 residues long: Peptide chain release factor 1 (351 aa).

Gln229 is modified (N5-methylglutamine). Residues 278-297 are disordered; sequence RVDDERSADRAAQVGSGDRS.

It belongs to the prokaryotic/mitochondrial release factor family. In terms of processing, methylated by PrmC. Methylation increases the termination efficiency of RF1.

The protein resides in the cytoplasm. Peptide chain release factor 1 directs the termination of translation in response to the peptide chain termination codons UAG and UAA. In Roseobacter denitrificans (strain ATCC 33942 / OCh 114) (Erythrobacter sp. (strain OCh 114)), this protein is Peptide chain release factor 1.